Here is a 276-residue protein sequence, read N- to C-terminus: Putative ABC transporter ATP-binding protein MA_4021 (276 aa).

An ABC transporter domain is found at 5–247 (FDLKNISYSY…DLNLLLSTNL (243 aa)). 38–45 (GSNGSGKS) contacts ATP.

This sequence belongs to the ABC transporter superfamily.

It is found in the cell membrane. Probably part of an ABC transporter complex. Responsible for energy coupling to the transport system. This is Putative ABC transporter ATP-binding protein MA_4021 from Methanosarcina acetivorans (strain ATCC 35395 / DSM 2834 / JCM 12185 / C2A).